The primary structure comprises 131 residues: Histone H2A.2 (131 aa).

Residues 1–22 (MSGGKGKAGSSEKASTSRSAKA) are disordered. Position 2 is an N-acetylserine (serine 2). Lysine 5 and lysine 7 each carry N6-acetyllysine. Residue glutamine 105 is modified to N5-methylglutamine. Serine 128 is modified (phosphoserine). The short motif at 128–129 (SQ) is the [ST]-Q motif element.

Belongs to the histone H2A family. The nucleosome is a histone octamer containing two molecules each of H2A, H2B, H3 and H4 assembled in one H3-H4 heterotetramer and two H2A-H2B heterodimers. The octamer wraps approximately 147 bp of DNA. In terms of processing, phosphorylated to form H2AS128ph (gamma-H2A) in response to DNA double-strand breaks (DSBs) generated by exogenous genotoxic agents and by stalled replication forks. Phosphorylation is dependent on the DNA damage checkpoint kinases MEC1/ATR and TEL1/ATM, spreads on either side of a detected DSB site and may mark the surrounding chromatin for recruitment of proteins required for DNA damage signaling and repair. Gamma-H2A is removed from the DNA prior to the strand invasion-primer extension step of the repair process and subsequently dephosphorylated. Dephosphorylation is necessary for efficient recovery from the DNA damage checkpoint. Post-translationally, acetylated by ESA1 to form H2AK4ac and H2AK7ac.

The protein localises to the nucleus. It is found in the chromosome. Functionally, core component of nucleosome which plays a central role in DNA double strand break (DSB) repair. Nucleosomes wrap and compact DNA into chromatin, limiting DNA accessibility to the cellular machineries which require DNA as a template. Histones thereby play a central role in transcription regulation, DNA repair, DNA replication and chromosomal stability. DNA accessibility is regulated via a complex set of post-translational modifications of histones, also called histone code, and nucleosome remodeling. The protein is Histone H2A.2 (HTA2) of Candida albicans (strain SC5314 / ATCC MYA-2876) (Yeast).